Here is a 436-residue protein sequence, read N- to C-terminus: Glutamyl-tRNA reductase (436 aa).

Substrate is bound by residues 49-52, S109, 114-116, and Q120; these read TCNR and EGQ. C50 functions as the Nucleophile in the catalytic mechanism. 198–203 serves as a coordination point for NADP(+); sequence GAGRMS.

This sequence belongs to the glutamyl-tRNA reductase family. In terms of assembly, homodimer.

It catalyses the reaction (S)-4-amino-5-oxopentanoate + tRNA(Glu) + NADP(+) = L-glutamyl-tRNA(Glu) + NADPH + H(+). It functions in the pathway porphyrin-containing compound metabolism; protoporphyrin-IX biosynthesis; 5-aminolevulinate from L-glutamyl-tRNA(Glu): step 1/2. It participates in porphyrin-containing compound metabolism; chlorophyll biosynthesis. Its function is as follows. Catalyzes the NADPH-dependent reduction of glutamyl-tRNA(Glu) to glutamate 1-semialdehyde (GSA). This chain is Glutamyl-tRNA reductase, found in Prochlorococcus marinus (strain MIT 9215).